A 520-amino-acid polypeptide reads, in one-letter code: Poly(A)-specific ribonuclease PNLDC1 (520 aa).

4 residues coordinate Mg(2+): Asp17, Glu19, Asp260, and Asp354. The helical transmembrane segment at 495–515 threads the bilayer; sequence VNCLLQVCGIVTAWALLAFIL.

This sequence belongs to the CAF1 family. Requires Mg(2+) as cofactor.

Its subcellular location is the endoplasmic reticulum membrane. The enzyme catalyses Exonucleolytic cleavage of poly(A) to 5'-AMP.. Functionally, 3'-exoribonuclease that has a preference for poly(A) tails of mRNAs, thereby efficiently degrading poly(A) tails. Exonucleolytic degradation of the poly(A) tail is often the first step in the decay of eukaryotic mRNAs and is also used to silence certain maternal mRNAs translationally during oocyte maturation and early embryonic development. May act as a regulator of multipotency in embryonic stem cells. Is a critical factor for proper spermatogenesis, involved in pre-piRNAs processing to generate mature piRNAs. This is Poly(A)-specific ribonuclease PNLDC1 from Homo sapiens (Human).